The chain runs to 375 residues: Methylthioribose-1-phosphate isomerase (375 aa).

The active-site Proton donor is the Asp-257.

It belongs to the eIF-2B alpha/beta/delta subunits family. MtnA subfamily.

It is found in the cytoplasm. Its subcellular location is the nucleus. The enzyme catalyses 5-(methylsulfanyl)-alpha-D-ribose 1-phosphate = 5-(methylsulfanyl)-D-ribulose 1-phosphate. It participates in amino-acid biosynthesis; L-methionine biosynthesis via salvage pathway; L-methionine from S-methyl-5-thio-alpha-D-ribose 1-phosphate: step 1/6. Its function is as follows. Catalyzes the interconversion of methylthioribose-1-phosphate (MTR-1-P) into methylthioribulose-1-phosphate (MTRu-1-P). In Leishmania infantum, this protein is Methylthioribose-1-phosphate isomerase.